Reading from the N-terminus, the 435-residue chain is Methanethiol oxidase (435 aa).

Residues 1–24 form the signal peptide; that stretch reads MKKHLLAGACALAMGFAVIPGTFA.

Belongs to the selenium-binding protein family. As to quaternary structure, homotetramer. It depends on Cu cation as a cofactor.

The protein resides in the periplasm. The catalysed reaction is methanethiol + O2 + H2O = hydrogen sulfide + formaldehyde + H2O2 + H(+). Its pathway is organosulfur degradation. With respect to regulation, inhibited by EDTA but not by EGTA. Functionally, catalyzes the oxidation of methanethiol. Can also degrade ethanethiol, but not methanol, methylamine or dimethylsulfide. In Hyphomicrobium sp, this protein is Methanethiol oxidase.